A 79-amino-acid polypeptide reads, in one-letter code: Small ribosomal subunit protein uS17 (79 aa).

This sequence belongs to the universal ribosomal protein uS17 family. As to quaternary structure, part of the 30S ribosomal subunit.

One of the primary rRNA binding proteins, it binds specifically to the 5'-end of 16S ribosomal RNA. The polypeptide is Small ribosomal subunit protein uS17 (Bartonella quintana (strain Toulouse) (Rochalimaea quintana)).